A 29-amino-acid polypeptide reads, in one-letter code: Vodo peptide N (29 aa).

The cyclopeptide (Gly-Asn) cross-link spans 1–29 (GLPVCGETCTLGKCYTAGCSCSWPVCYRN). Intrachain disulfides connect Cys5/Cys19, Cys9/Cys21, and Cys14/Cys26.

Post-translationally, this is a cyclic peptide.

In terms of biological role, probably participates in a plant defense mechanism. This chain is Vodo peptide N, found in Viola odorata (Sweet violet).